Consider the following 301-residue polypeptide: Single-stranded DNA-binding protein (301 aa).

Positions 3–7 (KRKST) are LAST. 4 residues coordinate Zn(2+): His-64, Cys-77, Cys-87, and Cys-90. Residues 272–301 (TKTEDDFMSSSSGSSSSADDTDLDDLLNDL) are disordered. Residues 279–289 (MSSSSGSSSSA) show a composition bias toward low complexity. Acidic residues predominate over residues 290 to 301 (DDTDLDDLLNDL).

The protein belongs to the Tequatrovirus single-stranded DNA-binding protein family. As to quaternary structure, homodimer in the absence of DNA, monomer when binding DNA. Interacts with the DNA helicase assembly protein; a ternary complex between the helicase assembly protein, the single-stranded DNA-binding protein and ssDNA is an obligatory intermediate in the helicase loading mechanism. Part of the replicase complex that includes the DNA polymerase, the polymerase clamp, the clamp loader complex, the single-stranded DNA binding protein, the primase, the DnaB-like SF4 replicative helicase and the helicase assembly factor. Interacts (via C-terminus) with the viral SF1 dDA helicase. Interacts with the viral SF2 UvsW repair helicase.

Functionally, single-stranded DNA-binding protein that participates in viral DNA replication, recombination, and repair. Coats the lagging-strand ssDNA as the replication fork advances. Stimulates the activities of viral DNA polymerase and DnaB-like SF4 replicative helicase, probably via its interaction with the helicase assembly factor. Stimulates the unwinding activity of UvsW helicase, inhibits it DNA winding activity. Together with DnaB-like SF4 replicative helicase and the helicase assembly factor, promotes pairing of two homologous DNA molecules containing complementary single-stranded regions and mediates homologous DNA strand exchange. Also promotes the formation of joint molecules. mRNA specific autogenous translational repressor. The chain is Single-stranded DNA-binding protein from Escherichia coli (Bacteriophage T4).